Consider the following 155-residue polypeptide: Transcriptional repressor NrdR (155 aa).

A compositionally biased stretch (basic residues) spans 1–10 (MQCPHCHHNS). Residues 1–21 (MQCPHCHHNSSRVVDSRPTDG) are disordered. A zinc finger spans residues 3–34 (CPHCHHNSSRVVDSRPTDGGRAIRRRRECENC). The region spanning 49 to 139 (LLVIKKNGTR…VYRQFKDMSV (91 aa)) is the ATP-cone domain.

This sequence belongs to the NrdR family. Zn(2+) serves as cofactor.

Functionally, negatively regulates transcription of bacterial ribonucleotide reductase nrd genes and operons by binding to NrdR-boxes. This chain is Transcriptional repressor NrdR, found in Lacticaseibacillus casei (strain BL23) (Lactobacillus casei).